The following is a 95-amino-acid chain: Large ribosomal subunit protein bL27 (95 aa).

The disordered stretch occupies residues 1-21 (MAHKKGASSSRNGRDSNAQRL). The span at 7-19 (ASSSRNGRDSNAQ) shows a compositional bias: polar residues.

The protein belongs to the bacterial ribosomal protein bL27 family.

The chain is Large ribosomal subunit protein bL27 from Parafrankia sp. (strain EAN1pec).